The sequence spans 955 residues: Iron-responsive element-binding protein 2 (955 aa).

Cys-504, Cys-570, and Cys-573 together coordinate [4Fe-4S] cluster.

It belongs to the aconitase/IPM isomerase family. Requires [4Fe-4S] cluster as cofactor. Post-translationally, ubiquitinated and degraded by the proteasome in presence of high level of iron and oxygen.

Its subcellular location is the cytoplasm. In terms of biological role, RNA-binding protein that binds to iron-responsive elements (IRES), which are stem-loop structures found in the 5'-UTR of ferritin, and delta aminolevulinic acid synthase mRNAs, and in the 3'-UTR of transferrin receptor mRNA. Binding to the IRE element in ferritin results in the repression of its mRNA translation. Binding of the protein to the transferrin receptor mRNA inhibits the degradation of this otherwise rapidly degraded mRNA. This is Iron-responsive element-binding protein 2 (ireb2) from Xenopus laevis (African clawed frog).